A 250-amino-acid chain; its full sequence is Triosephosphate isomerase (250 aa).

Asn-9–Lys-11 serves as a coordination point for substrate. His-96 acts as the Electrophile in catalysis. The Proton acceptor role is filled by Glu-168. Substrate is bound by residues Gly-174, Ser-216, and Gly-237–Gly-238.

It belongs to the triosephosphate isomerase family. As to quaternary structure, homodimer.

Its subcellular location is the cytoplasm. It catalyses the reaction D-glyceraldehyde 3-phosphate = dihydroxyacetone phosphate. Its pathway is carbohydrate biosynthesis; gluconeogenesis. It functions in the pathway carbohydrate degradation; glycolysis; D-glyceraldehyde 3-phosphate from glycerone phosphate: step 1/1. Its function is as follows. Involved in the gluconeogenesis. Catalyzes stereospecifically the conversion of dihydroxyacetone phosphate (DHAP) to D-glyceraldehyde-3-phosphate (G3P). In Leptospira interrogans serogroup Icterohaemorrhagiae serovar copenhageni (strain Fiocruz L1-130), this protein is Triosephosphate isomerase.